A 217-amino-acid polypeptide reads, in one-letter code: Probable transaldolase (217 aa).

K83 acts as the Schiff-base intermediate with substrate in catalysis.

The protein belongs to the transaldolase family. Type 3B subfamily.

The protein localises to the cytoplasm. It catalyses the reaction D-sedoheptulose 7-phosphate + D-glyceraldehyde 3-phosphate = D-erythrose 4-phosphate + beta-D-fructose 6-phosphate. Its pathway is carbohydrate degradation; pentose phosphate pathway; D-glyceraldehyde 3-phosphate and beta-D-fructose 6-phosphate from D-ribose 5-phosphate and D-xylulose 5-phosphate (non-oxidative stage): step 2/3. Functionally, transaldolase is important for the balance of metabolites in the pentose-phosphate pathway. The polypeptide is Probable transaldolase (Jannaschia sp. (strain CCS1)).